We begin with the raw amino-acid sequence, 752 residues long: MNINPYFLFIDVPIQAAISTTFPYTGVPPYSHGTGTGYTIDTVIRTHEYSNKGKQYISDVTGCAMVDPTNGPLPEDNEPSAYAQLDCVLEALDRMDEEHPGLFQAASQNAMEALMVTTVDKLTQGRQTFDWTVCRNQPAATALNTTITSFRLNDLNGADKGGLVPFCQDIIDSLDKPEMTFFSVKNIKKKLPAKNRKGFLIKRIPMKVKDRITRVEYIKRALSLNTMTKDAERGKLKRRAIATAGIQIRGFVLVVENLAKNICENLEQSGLPVGGNEKKAKLSNAVAKMLSNCPPGGISMTVTGDNTKWNECLNPRIFLAMTERITRDSPIWFRDFCSIAPVLFSNKIARLGKGFMITSKTKRLKAQIPCPDLFNIPLERYNEETRAKLKKLKPFFNEEGTASLSPGMMMGMFNMLSTVLGVAALGIKNIGNREYLWDGLQSSDDFALFVNAKDEETCMEGINDFYRTCKLLGINMSKKKSYCNETGMFEFTSMFYRDGFVSNFAMELPSFGVAGVNESADMAIGMTIIKNNMINNGMGPATAQTAIQLFIADYRYTYKCHRGDSKVEGKRMKIIKELWENTKGRDGLLVADGGPNIYNLRNLHIPEIVLKYNLMDPEYKGRLLHPQNPFVGHLSIEGIKEADITPAHGPIKKMDYDAVSGTHSWRTKRNRSILNTDQRNMILEEQCYAKCCNLFEACFNSASYRKPVGQHSMLEAMAHRLRMDARLDYESGRMSKDDFEKAMAHLGEIGHI.

2 short sequence motifs (nuclear localization signal) span residues 187-195 (IKKKLPAKN) and 203-216 (RIPM…TRVE). Positions 249–256 (RGFVLVVE) are promoter-binding site. The region spanning 286-482 (VAKMLSNCPP…GINMSKKKSY (197 aa)) is the RdRp catalytic domain.

This sequence belongs to the influenza viruses polymerase PB1 family. Influenza RNA polymerase is composed of three subunits: PB1, PB2 and PA. Interacts (via N-terminus) with PA (via C-terminus). Interacts (via C-terminus) with PB2 (via N-terminus); this interaction is essential for transcription initiation. Phosphorylated by host PRKCA.

Its subcellular location is the host nucleus. The protein localises to the host cytoplasm. It catalyses the reaction RNA(n) + a ribonucleoside 5'-triphosphate = RNA(n+1) + diphosphate. In terms of biological role, RNA-dependent RNA polymerase which is responsible for replication and transcription of virus RNA segments. The transcription of viral mRNAs occurs by a unique mechanism called cap-snatching. 5' methylated caps of cellular mRNAs are cleaved after 10-13 nucleotides by PA. In turn, these short capped RNAs are used as primers by PB1 for transcription of viral mRNAs. During virus replication, PB1 initiates RNA synthesis and copy vRNA into complementary RNA (cRNA) which in turn serves as a template for the production of more vRNAs. This is RNA-directed RNA polymerase catalytic subunit from Influenza B virus (strain B/Ann Arbor/1/1966 [wild-type]).